Reading from the N-terminus, the 576-residue chain is 4-alpha-glucanotransferase, chloroplastic/amyloplastic (576 aa).

The transit peptide at 1 to 52 directs the protein to the chloroplast; the sequence is MAIHTCFSLIPSSFSSPKLPYPKNTTFQSPIPKLSRPTFMFDRKGSFQNGTA.

Belongs to the disproportionating enzyme family. As to expression, present in leaves, stems, roots, and stolons but is most abundant in developing and mature tubers.

The protein resides in the plastid. The protein localises to the chloroplast. It localises to the amyloplast. The enzyme catalyses Transfers a segment of a (1-&gt;4)-alpha-D-glucan to a new position in an acceptor, which may be glucose or a (1-&gt;4)-alpha-D-glucan.. Its function is as follows. May act during starch breakdown to convert small oligosaccharides into larger molecules upon which starch phosphorylase can act, or may change the structure of starch molecules and grain architecture by modifying chain length, or may generate from starch and glucose oligosaccharides which can serve either as primers for new starch phosphoenzyme. This is 4-alpha-glucanotransferase, chloroplastic/amyloplastic (DPEP) from Solanum tuberosum (Potato).